A 190-amino-acid chain; its full sequence is Protein hunchback (190 aa).

Disordered stretches follow at residues 13–59 (EPMS…SSNL), 86–110 (AAMT…PNPM), and 142–190 (QTND…KYMA). Residues 17–31 (HHHHHSHHHGHHHML) are compositionally biased toward basic residues. The span at 90–100 (PSPSNNDQNSP) shows a compositional bias: polar residues. Residues 171-190 (EPEKDHDLISNSSEDMKYMA) show a composition bias toward basic and acidic residues.

This sequence belongs to the hunchback C2H2-type zinc-finger protein family.

Its subcellular location is the nucleus. Its function is as follows. Gap class segmentation protein that controls development of head structures. In Scaptomyza crassifemur (Fruit fly), this protein is Protein hunchback (hb).